The chain runs to 188 residues: Peptide deformylase (188 aa).

Residues Cys-107 and His-149 each contribute to the Fe cation site. Residue Glu-150 is part of the active site. His-153 is a Fe cation binding site.

This sequence belongs to the polypeptide deformylase family. It depends on Fe(2+) as a cofactor.

The enzyme catalyses N-terminal N-formyl-L-methionyl-[peptide] + H2O = N-terminal L-methionyl-[peptide] + formate. Removes the formyl group from the N-terminal Met of newly synthesized proteins. Requires at least a dipeptide for an efficient rate of reaction. N-terminal L-methionine is a prerequisite for activity but the enzyme has broad specificity at other positions. This chain is Peptide deformylase, found in Thermosynechococcus vestitus (strain NIES-2133 / IAM M-273 / BP-1).